A 569-amino-acid chain; its full sequence is Peroxisomal targeting signal receptor (569 aa).

C9 is covalently cross-linked (Glycyl cysteine thioester (Cys-Gly) (interchain with G-Cter in ubiquitin)). Residues 10–32 (AANANPLAQFFKQSQHDTSLEQS) are amphipathic helix 1 (AH1). Residue K21 forms a Glycyl lysine isopeptide (Lys-Gly) (interchain with G-Cter in ubiquitin) linkage. A disordered region spans residues 23–42 (SQHDTSLEQSLRNSAHDTHQ). Residues 57–72 (RAHMEQFMNQSTPFNF) are amphipathic helix 2 (AH2). 2 short sequence motifs (wxxxF/Y motif) span residues 118–122 (WSSEF) and 183–187 (WEQQF). Positions 218-234 (FDQVWDNIQETYADNML) are amphipathic helix 4 (AH4). Residues 243 to 247 (WEKDF) carry the WxxxF/Y motif 3 motif. 7 TPR repeats span residues 272-305 (LDAYEIGIKLMESGAKLSEAALAFEAAVEQNPGH), 306-339 (VDAWLRLGQVQTQNEKELAGIAALEKCLELSPQN), 340-377 (LVALMTLAISYINEGYDNAAFATLERWIETKYPEVAER), 378-415 (ARNANPDIQADDRFSLNKRVTQLFIKAAQLSPEGANMD), 416-449 (SEVQTGLGVLFYSMEEYSKTLDCFQAAIEHNPND), 450-483 (ALAWNRLGASLANSNKPEQAIEAYSRTLQLNPNF), and 484-517 (VRARYNLGVSFINMGMYRDAVDHLLTGLSMHEVE).

It belongs to the peroxisomal targeting signal receptor family. Interacts (via WxxxF/Y and LVxEF motifs) with PEX14; promoting translocation through the PEX13-PEX14 docking complex. Post-translationally, monoubiquitinated at Cys-9 by PEX2 during PEX5 passage through the retrotranslocation channel: monoubiquitination acts as a signal for PEX5 extraction and is required for proper export from peroxisomes and recycling. When PEX5 recycling is compromised, polyubiquitinated at Lys-21 by PEX10 during its passage through the retrotranslocation channel, leading to its degradation.

It localises to the cytoplasm. It is found in the cytosol. The protein resides in the peroxisome matrix. Its function is as follows. Receptor that mediates peroxisomal import of proteins containing a C-terminal PTS1-type tripeptide peroxisomal targeting signal (SKL-type). Binds to cargo proteins containing a PTS1 peroxisomal targeting signal in the cytosol, and translocates them into the peroxisome matrix by passing through the PEX13-PEX14 docking complex along with cargo proteins. PEX5 receptor is then retrotranslocated into the cytosol, leading to release of bound cargo in the peroxisome matrix, and reset for a subsequent peroxisome import cycle. In Pichia angusta (Yeast), this protein is Peroxisomal targeting signal receptor (PEX5).